The chain runs to 587 residues: Laccase abr2 (587 aa).

The N-terminal stretch at 1–17 (MWYQSASLLGVAAVAQA) is a signal peptide. Plastocyanin-like domains follow at residues 41-137 (IFVN…VHIR) and 168-350 (LVML…ANDG). The N-linked (GlcNAc...) asparagine glycan is linked to Asn-71. Residues His-75, His-77, His-119, and His-121 each contribute to the Cu cation site. 4 N-linked (GlcNAc...) asparagine glycosylation sites follow: Asn-228, Asn-383, Asn-420, and Asn-462. The region spanning 397–577 (PPYPAISPAS…ILMDGVDVWP (181 aa)) is the Plastocyanin-like 3 domain. His-487 contacts Cu cation. An N-linked (GlcNAc...) asparagine glycan is attached at Asn-504.

This sequence belongs to the multicopper oxidase family.

Its subcellular location is the cell surface. The protein operates within pigment biosynthesis; melanin biosynthesis. In terms of biological role, laccase; part of the gene cluster that mediates the biosynthesis of dihydroxynaphthalene (DHN)-melanin, a bluish-green pigment and a structural component of the conidial wall. The first step of the pathway is the production of the heptaketide naphtopyrone YWA1 by the polyketide synthase alb1 though condensation of acetyl-CoA with malonyl-CoA. The naphtopyrone YWA1 is then converted to the pentaketide 1,3,6,8-tetrahydroxynaphthalene (1,3,6,8-THN) by the heptaketide hydrolyase ayg1 though chain-length shortening. 1,3,6,8-THN is substrate of the hydroxynaphthalene reductase arp2 to yield scytalone. The scytalone dehydratase arp1 then reduces scytalone to 1,3,8-THN. 1,3,8-THN is also substrate of the hydroxynaphthalene reductase arp2 to yield vermelone. Vermelone is further converted by the multicopper oxidase abr1 to 1,8-DHN. Finally the laccase abr2 transforms 1,8-DHN to DHN-melanin. DHN-melanin biosynthesis appears to be initiated in endosomes where early enzymes (abl1, ayg1, arp1 and arp2) localize, with exocytosis leading to melanin deposition on the cell surface where late enzymes (abr1 and abr2) localize. DHN-melanin is an important structural component of the outer cell wall and is required for the presence of conidial surface hydrophobins. DHN-melanin also plays a crucial role in fungal virulence, including a protective role against the host's immune defenses. DHN-melanin also protects conidia against amoeba predation. The chain is Laccase abr2 from Aspergillus fumigatus (strain ATCC MYA-4609 / CBS 101355 / FGSC A1100 / Af293) (Neosartorya fumigata).